The primary structure comprises 240 residues: Keratinocyte-associated protein 3 (240 aa).

Transmembrane regions (helical) follow at residues 21–41 (VGLA…VLHG), 63–83 (VISV…LLAS), 95–115 (LLTL…GLLL), and 163–183 (ALAL…LSGY).

The protein belongs to the TMEM54 family.

It localises to the membrane. The protein is Keratinocyte-associated protein 3 (Krtcap3) of Mus musculus (Mouse).